The sequence spans 346 residues: Annexin A1 (346 aa).

S5 carries the post-translational modification Phosphoserine; by TRPM7. Q19 is covalently cross-linked (Isoglutamyl lysine isopeptide (Gln-Lys) (interchain with K-?)). Y21 is subject to Phosphotyrosine; by EGFR. Phosphoserine occurs at positions 34 and 37. 4 Annexin repeats span residues 42-113 (FNPS…ALLK), 114-185 (TPAR…SLAK), 197-269 (DLAD…AIVK), and 273-344 (SKPM…ALCG). K58 bears the N6-acetyllysine mark. G59, V60, E62, K97, L100, E105, M127, G129, G131, T132, and E134 together coordinate Ca(2+). The residue at position 136 (T136) is a Phosphothreonine. The Ca(2+) site is built by D171, G210, and R213. K214 participates in a covalent cross-link: Glycyl lysine isopeptide (Lys-Gly) (interchain with G-Cter in SUMO1); alternate. K214 participates in a covalent cross-link: Glycyl lysine isopeptide (Lys-Gly) (interchain with G-Cter in SUMO2); alternate. Positions 215, 253, 255, and 256 each coordinate Ca(2+). K257 is covalently cross-linked (Glycyl lysine isopeptide (Lys-Gly) (interchain with G-Cter in SUMO1)). 4 residues coordinate Ca(2+): E261, M286, G288, and G290. N6-acetyllysine is present on K312. The cysteines at positions 324 and 343 are disulfide-linked. Residues L328, E330, and T331 each contribute to the Ca(2+) site. A Glycyl lysine isopeptide (Lys-Gly) (interchain with G-Cter in SUMO1) cross-link involves residue K332. E336 lines the Ca(2+) pocket.

The protein belongs to the annexin family. Homodimer; non-covalently linked. Homodimer; linked by transglutamylation. Homodimers linked by transglutamylation are observed in placenta, but not in other tissues. Interacts with S100A11. Heterotetramer, formed by two molecules each of S100A11 and ANXA1. Interacts with DYSF. Interacts with EGFR. Phosphorylated by protein kinase C, EGFR and TRPM7. Phosphorylated in response to EGF treatment. In terms of processing, sumoylated. Post-translationally, proteolytically cleaved by cathepsin CTSG to release the active N-terminal peptide Ac2-26.

The protein resides in the nucleus. It is found in the cytoplasm. It localises to the cell projection. Its subcellular location is the cilium. The protein localises to the basolateral cell membrane. The protein resides in the lateral cell membrane. It is found in the cell membrane. It localises to the apical cell membrane. Its subcellular location is the membrane. The protein localises to the early endosome. The protein resides in the cytoplasmic vesicle membrane. It is found in the endosome membrane. It localises to the secreted. Its subcellular location is the extracellular space. The protein localises to the extracellular exosome. The protein resides in the cytoplasmic vesicle. It is found in the secretory vesicle lumen. It localises to the phagocytic cup. Plays important roles in the innate immune response as effector of glucocorticoid-mediated responses and regulator of the inflammatory process. Has anti-inflammatory activity. Plays a role in glucocorticoid-mediated down-regulation of the early phase of the inflammatory response. Contributes to the adaptive immune response by enhancing signaling cascades that are triggered by T-cell activation, regulates differentiation and proliferation of activated T-cells. Promotes the differentiation of T-cells into Th1 cells and negatively regulates differentiation into Th2 cells. Has no effect on unstimulated T-cells. Negatively regulates hormone exocytosis via activation of the formyl peptide receptors and reorganization of the actin cytoskeleton. Has high affinity for Ca(2+) and can bind up to eight Ca(2+) ions. Displays Ca(2+)-dependent binding to phospholipid membranes. Plays a role in the formation of phagocytic cups and phagosomes. Plays a role in phagocytosis by mediating the Ca(2+)-dependent interaction between phagosomes and the actin cytoskeleton. Functionally, functions at least in part by activating the formyl peptide receptors and downstream signaling cascades. Promotes chemotaxis of granulocytes and monocytes via activation of the formyl peptide receptors. Promotes rearrangement of the actin cytoskeleton, cell polarization and cell migration. Promotes resolution of inflammation and wound healing. Acts via neutrophil N-formyl peptide receptors to enhance the release of CXCL2. The sequence is that of Annexin A1 (ANXA1) from Equus caballus (Horse).